We begin with the raw amino-acid sequence, 125 residues long: Small ribosomal subunit protein uS12m (125 aa).

This sequence belongs to the universal ribosomal protein uS12 family.

The protein localises to the mitochondrion. Functionally, protein S12 is involved in the translation initiation step. In Allium cepa (Onion), this protein is Small ribosomal subunit protein uS12m (RPS12).